The primary structure comprises 128 residues: Photosystem II reaction center Psb28 protein (128 aa).

Residues 109-128 (SGLGYSQDSGEAPASDSSNG) form a disordered region. Polar residues predominate over residues 111 to 128 (LGYSQDSGEAPASDSSNG).

It belongs to the Psb28 family. In terms of assembly, part of the photosystem II complex.

Its subcellular location is the cellular thylakoid membrane. The polypeptide is Photosystem II reaction center Psb28 protein (Synechococcus sp. (strain CC9311)).